The primary structure comprises 2647 residues: Filamin-A (2647 aa).

Residues 1-37 (MSSSHSRCGQSAAVASPGGSIDSRDAEMPATEKDLAE) are disordered. At S2 the chain carries N-acetylserine. Residues 2 to 274 (SSSHSRCGQS…PKAKLKPGAP (273 aa)) form an actin-binding region. Phosphoserine is present on residues S11, S16, and S20. Positions 22–37 (DSRDAEMPATEKDLAE) are enriched in basic and acidic residues. Glycyl lysine isopeptide (Lys-Gly) (interchain with G-Cter in ubiquitin) cross-links involve residues K42, K43, and K135. Calponin-homology (CH) domains follow at residues 43 to 149 (KIQQ…LHYS) and 166 to 269 (QTPK…KAKL). Residues 271–294 (PGAPLRPKLNPKKARAYGPGIEPT) form a disordered region. 15 Filamin repeats span residues 276–374 (RPKL…EVYV), 376–474 (KSQG…TVTV), 475–570 (GQAC…EVKV), 571–663 (GTEC…MADI), 667–763 (PQDF…RVNV), 764–866 (GAGS…RVKV), 867–965 (EPSH…SVGV), 966–1061 (SPSL…PLEA), 1062–1154 (VAPT…KAHV), 1155–1249 (APCF…KLQV), 1250–1349 (EPAV…QVPV), 1350–1442 (TEGC…KVPV), 1443–1539 (HDVT…KVKV), 1540–1636 (LPTH…RVRA), and 1641–1740 (DASK…QVTA). A Glycyl lysine isopeptide (Lys-Gly) (interchain with G-Cter in SUMO1); alternate cross-link involves residue K299. A Glycyl lysine isopeptide (Lys-Gly) (interchain with G-Cter in SUMO2); alternate cross-link involves residue K299. Residues K376 and K508 each carry the N6-acetyllysine modification. N6-acetyllysine is present on residues K700, K781, K837, K865, and K906. Phosphoserine occurs at positions 968 and 1055. Position 1071 is an N6-acetyllysine; alternate (K1071). K1071 is modified (N6-succinyllysine; alternate). S1084 is modified (phosphoserine). Position 1089 is a phosphothreonine (T1089). Residues S1301 and S1338 each carry the phosphoserine modification. K1372 bears the N6-acetyllysine mark. 2 positions are modified to phosphoserine: S1459 and S1533. The interval 1490 to 1607 (PKGLVEPVDV…DNHDGTYTVA (118 aa)) is interaction with furin. Position 1538 is an N6-acetyllysine (K1538). Residues S1630 and S1734 each carry the phosphoserine modification. The hinge 1 stretch occupies residues 1741–1778 (LAGDQPTVQTPLRSQQLAPQYNYPQGSQQTWIPERPMV). The residue at position 1750 (T1750) is a Phosphothreonine. Filamin repeat units lie at residues 1765–1860 (QGSQ…QFYV), 1861–1952 (DYVN…TARV), 1953–2039 (TGDD…PVVI), 2042–2134 (SEIG…SVKV), 2135–2230 (TGEG…QFTV), 2233–2325 (LGEG…VVPV), 2327–2420 (SPSG…KIRV), and 2424–2516 (GHGG…KAKV). S1835 is modified (phosphoserine). Phosphoserine is present on residues S1967, S2053, S2128, S2152, S2158, S2163, S2180, S2284, S2327, and S2329. Phosphothreonine is present on T2336. A phosphoserine mark is found at S2338, S2370, S2414, S2510, S2523, and S2526. The hinge 2 stretch occupies residues 2517–2553 (TGPRLVSNHSLHETSSVFVDSLTKVATVPQHATSGPG). The interval 2517-2647 (TGPRLVSNHS…PGSPYRIMVP (131 aa)) is self-association site, tail. A Filamin 24 repeat occupies 2552 to 2646 (PGPADVSKVV…IPGSPYRIMV (95 aa)). K2569 carries the N6-acetyllysine; alternate modification. K2569 is subject to N6-succinyllysine; alternate. K2575 is subject to N6-acetyllysine. Residue T2599 is modified to Phosphothreonine. N6-acetyllysine occurs at positions 2607 and 2621.

It belongs to the filamin family. As to quaternary structure, homodimer. Interacts with FCGR1A, FLNB, FURIN, HSPB7, KCND2, INPPL1, MYOT, MYOZ1, PDLIM2, ARHGAP24, PSEN1, PSEN2 and ECSCR. Also interacts with various other binding partners in addition to filamentous actin. Interacts (via N-terminus) with TAF1B. Interacts (via N-terminus) with MIS18BP1 (via N-terminus). Interacts with TMEM67 (via C-terminus) and MKS1. Interacts (via actin-binding domain) with MICALL2 (via calponin-homology (CH) domain). Interacts with RFLNA and RFLNB. Interacts (via filamin repeat 5) with SYK; docks SYK to the plasma membrane. Interacts (via filamin repeats 19 and 21) with DRD3; increased PKA-mediated phosphorylation at Ser-2152. Interacts (via filamin repeat 21) with MAS1, AGTR1 and ADRA1D; increases PKA-mediated phosphorylation of FLNA at Ser-2152. Interacts (via filamin repeats 4, 9, 12, 17, 19, 21, and 23) with GP1BA (high affinity), ITGB7, ITGB2 and FBLIM1. Interacts with CEACAM1 (via cytoplasmic domain); inhibits cell migration and cell scattering by interfering with the interaction between FLNA and RALA. Interacts with FOXC1. Interacts (via calponin-homology (CH) domain 1 and filamin repeat 24) with CRMP1; the interaction alters FLNA ternary structure and thus promotes FLNA dissociation from F-actin. Interacts with DPYSL3/CRMP3 and DPYSL4/CRMP4. Phosphorylation at Ser-2152 is negatively regulated by the autoinhibited conformation of filamin repeats 19-21. Ligand binding induces a conformational switch triggering phosphorylation at Ser-2152 by PKA. In terms of processing, polyubiquitination in the CH1 domain by a SCF-like complex containing ASB2 leads to proteasomal degradation. Prior dissociation from actin may be required to expose the target lysines. Ubiquitinated in endothelial cells by RNF213 downstream of the non-canonical Wnt signaling pathway, leading to its degradation by the proteasome. As to expression, widely expressed. Highly expressed in Purkinje cells.

It is found in the cytoplasm. It localises to the cell cortex. The protein resides in the cytoskeleton. The protein localises to the perikaryon. Its subcellular location is the cell projection. It is found in the growth cone. It localises to the podosome. In terms of biological role, actin binding protein that promotes orthogonal branching of actin filaments and links actin filaments to membrane glycoproteins. Anchors various transmembrane proteins to the actin cytoskeleton and serves as a scaffold for a wide range of cytoplasmic signaling proteins. Interaction with FLNB may allow neuroblast migration from the ventricular zone into the cortical plate. Tethers cell surface-localized furin, modulates its rate of internalization and directs its intracellular trafficking. Involved in ciliogenesis. Plays a role in cell-cell contacts and adherens junctions during the development of blood vessels, heart and brain organs. Plays a role in platelets morphology through interaction with SYK that regulates ITAM- and ITAM-like-containing receptor signaling, resulting in by platelet cytoskeleton organization maintenance. During the axon guidance process, required for growth cone collapse induced by SEMA3A-mediated stimulation of neurons. The polypeptide is Filamin-A (Flna) (Mus musculus (Mouse)).